Here is a 268-residue protein sequence, read N- to C-terminus: Small ribosomal subunit protein uS3 (268 aa).

A KH type-2 domain is found at 38-106; it reads IRKLLATGME…QVQLNILEVK (69 aa). The tract at residues 217-268 is disordered; that stretch reads NTAAPAGDRPRRERPSRPRRSGATGTTATSTEAGRAATATADAPATEQNQEG. A compositionally biased stretch (low complexity) spans 237–268; the sequence is SGATGTTATSTEAGRAATATADAPATEQNQEG.

The protein belongs to the universal ribosomal protein uS3 family. As to quaternary structure, part of the 30S ribosomal subunit. Forms a tight complex with proteins S10 and S14.

Its function is as follows. Binds the lower part of the 30S subunit head. Binds mRNA in the 70S ribosome, positioning it for translation. The polypeptide is Small ribosomal subunit protein uS3 (Rhodococcus erythropolis (strain PR4 / NBRC 100887)).